Here is a 75-residue protein sequence, read N- to C-terminus: Small ribosomal subunit protein bS16 (75 aa).

This sequence belongs to the bacterial ribosomal protein bS16 family.

The protein is Small ribosomal subunit protein bS16 of Aliarcobacter butzleri (strain RM4018) (Arcobacter butzleri).